A 418-amino-acid polypeptide reads, in one-letter code: Lysophosphatidic acid phosphatase type 6 (418 aa).

Residues 1-25 (MRVWVPVGVLTSLAYCFHQRRVALA) constitute a mitochondrion transit peptide. Residues 51-161 (RHGARSPLKP…VFIRSTNMFR (111 aa)) form a substrate binding region. His52 acts as the Nucleophile in catalysis. Asp327 (proton donor) is an active-site residue.

Belongs to the histidine acid phosphatase family. As to quaternary structure, monomer.

It localises to the mitochondrion. It carries out the reaction a phosphate monoester + H2O = an alcohol + phosphate. The catalysed reaction is 1-(9Z-octadecenoyl)-sn-glycero-3-phosphate + H2O = 1-(9Z-octadecenoyl)-sn-glycerol + phosphate. Functionally, hydrolyzes lysophosphatidic acid (LPA) containing a medium length fatty acid chain to the corresponding monoacylglycerol. Has highest activity with lysophosphatidic acid containing myristate (C14:0), monounsaturated oleate (C18:1) or palmitate (C16:0), and lower activity with C18:0 and C6:0 lysophosphatidic acid. This Mus musculus (Mouse) protein is Lysophosphatidic acid phosphatase type 6 (Acp6).